Consider the following 207-residue polypeptide: Holliday junction branch migration complex subunit RuvA (207 aa).

The segment at 1–64 is domain I; sequence MISYIKGELA…EDECSLFGFL (64 aa). A domain II region spans residues 65 to 143; that stretch reads TRDDLSMFKM…LDEVFESALS (79 aa). The flexible linker stretch occupies residues 144–155; it reads KNKKADNNSNVS. The interval 156–207 is domain III; it reads NVMMIRNDAVEALVSLGYSSKDALVAVKEVEDIENKDSETVLKEALKKLVKF.

This sequence belongs to the RuvA family. As to quaternary structure, homotetramer. Forms an RuvA(8)-RuvB(12)-Holliday junction (HJ) complex. HJ DNA is sandwiched between 2 RuvA tetramers; dsDNA enters through RuvA and exits via RuvB. An RuvB hexamer assembles on each DNA strand where it exits the tetramer. Each RuvB hexamer is contacted by two RuvA subunits (via domain III) on 2 adjacent RuvB subunits; this complex drives branch migration. In the full resolvosome a probable DNA-RuvA(4)-RuvB(12)-RuvC(2) complex forms which resolves the HJ.

It localises to the cytoplasm. The RuvA-RuvB-RuvC complex processes Holliday junction (HJ) DNA during genetic recombination and DNA repair, while the RuvA-RuvB complex plays an important role in the rescue of blocked DNA replication forks via replication fork reversal (RFR). RuvA specifically binds to HJ cruciform DNA, conferring on it an open structure. The RuvB hexamer acts as an ATP-dependent pump, pulling dsDNA into and through the RuvAB complex. HJ branch migration allows RuvC to scan DNA until it finds its consensus sequence, where it cleaves and resolves the cruciform DNA. The sequence is that of Holliday junction branch migration complex subunit RuvA from Lachnospira eligens (strain ATCC 27750 / DSM 3376 / VPI C15-48 / C15-B4) (Eubacterium eligens).